The chain runs to 226 residues: MALSDADVQKQIKHMMAFIEQEANEKAEEIDAKAEEEFNIEKGRLVQQQRLKIMEYYEKKEKQVELQKKIQSSNMLNQARLKVLKVREDHVSSVLDDARKRLGEVTKNQSEYETVLTKLIVQGLFQIMEPKVILRCREVDVPLVRNVLPAAVEQYKAQINQNVELFIDEKDFLSADTCGGVELLALNGRIKVPNTLESRLDLISQQLVPEIRNALFGRNVNRKFTD.

This sequence belongs to the V-ATPase E subunit family. V-ATPase is a heteromultimeric enzyme made up of two complexes: the ATP-hydrolytic V1 complex and the proton translocation V0 complex. The V1 complex consists of three catalytic AB heterodimers that form a heterohexamer, three peripheral stalks each consisting of EG heterodimers, one central rotor including subunits D and F, and the regulatory subunits C and H. The proton translocation complex V0 consists of the proton transport subunit a, a ring of proteolipid subunits c9c'', rotary subunit d, subunits e and f, and the accessory subunits VhaAC45 and ATP6AP2.

Its function is as follows. Subunit of the V1 complex of vacuolar(H+)-ATPase (V-ATPase), a multisubunit enzyme composed of a peripheral complex (V1) that hydrolyzes ATP and a membrane integral complex (V0) that translocates protons. V-ATPase is responsible for acidifying and maintaining the pH of intracellular compartments and in some cell types, is targeted to the plasma membrane, where it is responsible for acidifying the extracellular environment. This chain is V-type proton ATPase subunit E (Vha26), found in Drosophila melanogaster (Fruit fly).